Consider the following 208-residue polypeptide: FMN-dependent NADH:quinone oxidoreductase (208 aa).

Residues His-10, 17-19 (SRS), 104-107 (MWNL), 148-153 (SNGGFY), and Asp-184 each bind FMN.

The protein belongs to the azoreductase type 1 family. In terms of assembly, homodimer. It depends on FMN as a cofactor.

It catalyses the reaction 2 a quinone + NADH + H(+) = 2 a 1,4-benzosemiquinone + NAD(+). The enzyme catalyses N,N-dimethyl-1,4-phenylenediamine + anthranilate + 2 NAD(+) = 2-(4-dimethylaminophenyl)diazenylbenzoate + 2 NADH + 2 H(+). Quinone reductase that provides resistance to thiol-specific stress caused by electrophilic quinones. Its function is as follows. Also exhibits azoreductase activity. Catalyzes the reductive cleavage of the azo bond in aromatic azo compounds to the corresponding amines. Requires NADH, but not NADPH, as an electron donor for its activity. The enzyme can also reduce a wide range of sulfonated azo dyes. The substrate preference order is methyl Red &gt; Orange II &gt; Ponceau BS &gt; Ponceau S &gt; Orange G &gt; Amaranth. In Enterococcus faecalis (strain ATCC 700802 / V583), this protein is FMN-dependent NADH:quinone oxidoreductase.